The following is a 396-amino-acid chain: L-lactate dehydrogenase (396 aa).

One can recognise an FMN hydroxy acid dehydrogenase domain in the interval 1–380 (MIISAASDYR…SGDSLVQELG (380 aa)). Tyr-24 serves as a coordination point for substrate. FMN contacts are provided by Ser-106 and Gln-127. A substrate-binding site is contributed by Tyr-129. Residue Thr-155 coordinates FMN. Arg-164 provides a ligand contact to substrate. Residue Lys-251 participates in FMN binding. Catalysis depends on His-275, which acts as the Proton acceptor. Arg-278 is a binding site for substrate. 306 to 330 (DSGIRNGLDVVRMIALGADTVLLGR) is an FMN binding site.

The protein belongs to the FMN-dependent alpha-hydroxy acid dehydrogenase family. The cofactor is FMN.

The protein localises to the cell inner membrane. The enzyme catalyses (S)-lactate + A = pyruvate + AH2. In terms of biological role, catalyzes the conversion of L-lactate to pyruvate. Is coupled to the respiratory chain. The polypeptide is L-lactate dehydrogenase (Salmonella paratyphi B (strain ATCC BAA-1250 / SPB7)).